Consider the following 270-residue polypeptide: Putative [LysW]-aminoadipate/[LysW]-glutamate kinase (270 aa).

Residues 42 to 43 (GG), R69, and N177 contribute to the substrate site.

It belongs to the acetylglutamate kinase family. LysZ subfamily.

The protein localises to the cytoplasm. The catalysed reaction is [amino-group carrier protein]-C-terminal-N-(1,4-dicarboxybutan-1-yl)-L-glutamine + ATP = [amino-group carrier protein]-C-terminal-N-(1-carboxy-5-phosphooxy-5-oxopentan-1-yl)-L-glutamine + ADP. It catalyses the reaction [amino-group carrier protein]-C-terminal-gamma-(L-glutamyl)-L-glutamate + ATP = [amino-group carrier protein]-C-terminal-gamma-(5-phospho-L-glutamyl)-L-glutamate + ADP. It functions in the pathway amino-acid biosynthesis; L-lysine biosynthesis via AAA pathway; L-lysine from L-alpha-aminoadipate (Thermus route): step 2/5. Its pathway is amino-acid biosynthesis; L-arginine biosynthesis. Functionally, involved in both the arginine and lysine biosynthetic pathways. Phosphorylates the LysW-bound precursors glutamate (for arginine biosynthesis), respectively alpha-aminoadipate (for lysine biosynthesis). The polypeptide is Putative [LysW]-aminoadipate/[LysW]-glutamate kinase (Aeropyrum pernix (strain ATCC 700893 / DSM 11879 / JCM 9820 / NBRC 100138 / K1)).